Here is a 302-residue protein sequence, read N- to C-terminus: Glutaminase (302 aa).

7 residues coordinate substrate: Ser-61, Asn-111, Glu-155, Asn-162, Tyr-186, Tyr-238, and Val-256.

It belongs to the glutaminase family. Homotetramer.

The enzyme catalyses L-glutamine + H2O = L-glutamate + NH4(+). The sequence is that of Glutaminase from Pseudomonas fluorescens (strain ATCC BAA-477 / NRRL B-23932 / Pf-5).